The following is a 901-amino-acid chain: HTH-type transcriptional regulator MalT (901 aa).

Position 39 to 46 (39 to 46) interacts with ATP; sequence SPAGYGKT. An HTH luxR-type domain is found at 829–894; the sequence is ELIRTSPLTQ…AAVQHAQKLL (66 aa). The segment at residues 853 to 872 is a DNA-binding region (H-T-H motif); the sequence is NEQIAGELEVAATTIKTHIR.

It belongs to the MalT family. As to quaternary structure, monomer in solution. Oligomerizes to an active state in the presence of the positive effectors ATP and maltotriose.

With respect to regulation, activated by ATP and maltotriose, which are both required for DNA binding. In terms of biological role, positively regulates the transcription of the maltose regulon whose gene products are responsible for uptake and catabolism of malto-oligosaccharides. Specifically binds to the promoter region of its target genes, recognizing a short DNA motif called the MalT box. This chain is HTH-type transcriptional regulator MalT, found in Escherichia coli O45:K1 (strain S88 / ExPEC).